The chain runs to 238 residues: Zinc import ATP-binding protein ZnuC (238 aa).

Positions Val5–Lys220 constitute an ABC transporter domain. Gly37–Ser44 is an ATP binding site.

Belongs to the ABC transporter superfamily. Zinc importer (TC 3.A.1.15.5) family. The complex is composed of two ATP-binding proteins (ZnuC), two transmembrane proteins (ZnuB) and a solute-binding protein (ZnuA).

The protein localises to the cell inner membrane. The catalysed reaction is Zn(2+)(out) + ATP(in) + H2O(in) = Zn(2+)(in) + ADP(in) + phosphate(in) + H(+)(in). Part of the ABC transporter complex ZnuABC involved in zinc import. Responsible for energy coupling to the transport system. This Buchnera aphidicola subsp. Acyrthosiphon pisum (strain APS) (Acyrthosiphon pisum symbiotic bacterium) protein is Zinc import ATP-binding protein ZnuC.